The sequence spans 226 residues: Adenylate kinase (226 aa).

12-17 (GSGKGT) contributes to the ATP binding site. The tract at residues 32–61 (ESGAIFREHIGGGTELGLKAKEYIERGDLV) is NMP. AMP contacts are provided by residues S33, R38, 59–61 (DLV), 87–90 (GFPR), and Q94. An LID region spans residues 128–171 (GRRLCVNDNNHPNHIAFEAIKPVEKDGKLVCRVCGGDLKTRPDD). R129 lines the ATP pocket. AMP contacts are provided by R168 and R180. Residue A213 coordinates ATP.

Belongs to the adenylate kinase family. In terms of assembly, monomer.

It is found in the cytoplasm. It carries out the reaction AMP + ATP = 2 ADP. Its pathway is purine metabolism; AMP biosynthesis via salvage pathway; AMP from ADP: step 1/1. Functionally, catalyzes the reversible transfer of the terminal phosphate group between ATP and AMP. Plays an important role in cellular energy homeostasis and in adenine nucleotide metabolism. This chain is Adenylate kinase, found in Desulfotalea psychrophila (strain LSv54 / DSM 12343).